The chain runs to 360 residues: Decorin (360 aa).

A signal peptide spans 1-16; sequence MKATIIFLLVAQVSWA. Positions 17–30 are excised as a propeptide; the sequence is GPFQQKGLFDFMLE. An O-linked (Xyl...) (glycosaminoglycan) serine glycan is attached at S34. Intrachain disulfides connect C55–C61 and C59–C68. LRR repeat units follow at residues 74-94, 95-118, 119-142, 143-163, 164-187, 188-213, 214-234, 235-258, 259-282, 283-305, 306-335, and 336-360; these read EKVPKDLPPDTALLDLQNNKI, TEIKDGDFKNLKNLHTLILINNKI, SKISPGAFAPLVKLERLYLSKNQL, KELPEKMPKTLQELRVHENEI, TKVRKSVFNGLNQMIVVELGTNPL, KSSGIENGAFQGMKKLSYIRIADTNI, TTIPQGLPPSLTELHLDGNKI, TKVDAASLKGLNNLAKLGLSFNSI, SAVDNGSLANTPHLRELHLNNNKL, VKVPGGLADHKYIQVVYLHNNNI, SAIGSNDFCPPGYNTKKASYSGVSLFSNPV, and QYWEIQPSTFRCVYVRAAVQLGNYK. N212 carries N-linked (GlcNAc...) asparagine glycosylation. N-linked (GlcNAc...) asparagine glycosylation is found at N263 and N304. The cysteines at positions 314 and 347 are disulfide-linked.

It belongs to the small leucine-rich proteoglycan (SLRP) family. SLRP class I subfamily. In terms of assembly, binds to type I and type II collagen, fibronectin and TGF-beta. Forms a ternary complex with MFAP2 and ELN. Interacts with DPT. In terms of processing, the attached glycosaminoglycan chain can be either chondroitin 4-sulfate, chondroitin 6-sulfate or dermatan sulfate, depending upon the tissue of origin.

The protein localises to the secreted. Its subcellular location is the extracellular space. The protein resides in the extracellular matrix. Its function is as follows. May affect the rate of fibrils formation. The chain is Decorin (DCN) from Bos taurus (Bovine).